The chain runs to 461 residues: Argininosuccinate lyase (461 aa).

It belongs to the lyase 1 family. Argininosuccinate lyase subfamily.

It localises to the cytoplasm. The catalysed reaction is 2-(N(omega)-L-arginino)succinate = fumarate + L-arginine. The protein operates within amino-acid biosynthesis; L-arginine biosynthesis; L-arginine from L-ornithine and carbamoyl phosphate: step 3/3. This Nitrosomonas europaea (strain ATCC 19718 / CIP 103999 / KCTC 2705 / NBRC 14298) protein is Argininosuccinate lyase.